Here is a 482-residue protein sequence, read N- to C-terminus: ATP synthase subunit beta (482 aa).

Position 161 to 168 (161 to 168 (GGAGVGKT)) interacts with ATP.

Belongs to the ATPase alpha/beta chains family. As to quaternary structure, F-type ATPases have 2 components, CF(1) - the catalytic core - and CF(0) - the membrane proton channel. CF(1) has five subunits: alpha(3), beta(3), gamma(1), delta(1), epsilon(1). CF(0) has four main subunits: a(1), b(1), b'(1) and c(9-12).

The protein resides in the cellular thylakoid membrane. The catalysed reaction is ATP + H2O + 4 H(+)(in) = ADP + phosphate + 5 H(+)(out). Produces ATP from ADP in the presence of a proton gradient across the membrane. The catalytic sites are hosted primarily by the beta subunits. This is ATP synthase subunit beta from Gloeothece citriformis (strain PCC 7424) (Cyanothece sp. (strain PCC 7424)).